The chain runs to 1754 residues: Collagen alpha-1(XVIII) chain (1754 aa).

A signal peptide spans 1 to 23 (MAPYPCGCHILLLLFCCLAAARA). Positions 42-104 (ATTIPEPQGP…TSAESPDAPE (63 aa)) are disordered. A compositionally biased stretch (polar residues) spans 57–73 (TADTTTHVTPRNGSTEP). Residues asparagine 68, asparagine 129, and asparagine 164 are each glycosylated (N-linked (GlcNAc...) asparagine). The interval 152-256 (LALAGPSSTP…APSQQLQRPD (105 aa)) is disordered. Over residues 157–169 (PSSTPQENGTTLW) the composition is skewed to polar residues. Positions 215–253 (SGRASLSSLLGGAPPWGSLQDPDSQGLSPAAAAPSQQLQ) are enriched in low complexity. The FZ domain maps to 329-446 (APAGRCLPLP…TQEDGYCVLI (118 aa)). 5 cysteine pairs are disulfide-bonded: cysteine 334–cysteine 397, cysteine 344–cysteine 390, cysteine 381–cysteine 419, cysteine 408–cysteine 443, and cysteine 412–cysteine 432. The Laminin G-like domain occupies 456–644 (EVGLLQLLGD…IAELKVRRDP (189 aa)). Positions 645–751 (QVSPMHCLDE…RTPGGRVKEG (107 aa)) are nonhelical region 1 (NC1). The segment at 645-1443 (QVSPMHCLDE…GPPGTMGASS (799 aa)) is disordered. The segment covering 672-681 (DARELLREET) has biased composition (basic and acidic residues). The residue at position 696 (threonine 696) is a Phosphothreonine. The segment covering 717–738 (QTTVASLGAQTLPGSDSVSTWD) has biased composition (polar residues). The triple-helical region 1 (COL1) stretch occupies residues 752-785 (GLKGQKGEPGVPGPPGRAGPPGSPCLPGPPGLPC). A compositionally biased stretch (pro residues) spans 762–789 (VPGPPGRAGPPGSPCLPGPPGLPCPVSP). Residues 786–795 (PVSPLGPAGP) are nonhelical region 2 (NC2). The segment at 796 to 875 (ALQTVPGPQG…QGPPGPPGPS (80 aa)) is triple-helical region 2 (COL2). Residues 815 to 831 (TPGRDGEPGDPGEDGKP) show a composition bias toward basic and acidic residues. A compositionally biased stretch (low complexity) spans 833 to 846 (DTGPQGFPGTPGDV). Residues 862 to 874 (PPGPQGPPGPPGP) show a composition bias toward pro residues. A nonhelical region 3 (NC3) region spans residues 876–899 (FRHDKLTFIDMEGSGFGGDLEALR). An O-linked (Xyl...) (chondroitin sulfate) serine glycan is attached at serine 889. Residues 900 to 1021 (GPRGFPGPPG…PGPPGPPGPG (122 aa)) are triple-helical region 3 (COL3). Residues 904–914 (FPGPPGPPGVP) show a composition bias toward pro residues. The N-linked (GlcNAc...) asparagine glycan is linked to asparagine 926. The span at 930 to 942 (VPGPAGLPGVPGR) shows a compositional bias: low complexity. A compositionally biased stretch (pro residues) spans 946 to 961 (PGFPGLPGPPGPPGRE). The segment covering 976–1003 (AGAPGHKGSKGAPGPAGARGESGLAGAP) has biased composition (low complexity). A compositionally biased stretch (pro residues) spans 1005–1021 (PAGPPGPPGPPGPPGPG). The nonhelical region 4 (NC4) stretch occupies residues 1022–1044 (LPAGFDDMEGSGGPFWSTARSAD). Residues 1045 to 1127 (GPQGPPGLPG…PGPPGPPGPV (83 aa)) are triple-helical region 4 (COL4). Low complexity predominate over residues 1053–1065 (PGLKGDPGVPGLP). The span at 1095 to 1109 (KGDRGSRGEKGDPGK) shows a compositional bias: basic and acidic residues. Residues 1117–1126 (LPGPPGPPGP) are compositionally biased toward pro residues. The nonhelical region 5 (NC5) stretch occupies residues 1128 to 1141 (VYVSEQDGSVLSVP). The segment covering 1141-1153 (PGPEGRPGFAGFP) has biased composition (low complexity). Positions 1142 to 1183 (GPEGRPGFAGFPGPAGPKGNLGSKGERGSPGPKGEKGEPGSI) are triple-helical region 5 (COL5). The interval 1184–1196 (FSPDGGALGPAQK) is nonhelical region 6 (NC6). The segment at 1197-1269 (GAKGEPGFRG…PGPPGPPGTP (73 aa)) is triple-helical region 6 (COL6). The segment covering 1254–1268 (PGPPGPPGPPGPPGT) has biased composition (pro residues). The nonhelical region 7 (NC7) stretch occupies residues 1270–1279 (VYDSNVFAES). A triple-helical region 7 (COL7) region spans residues 1280 to 1312 (SRPGPPGLPGNQGPPGPKGAKGEVGPPGPPGQF). A compositionally biased stretch (pro residues) spans 1282–1296 (PGPPGLPGNQGPPGP). Residues 1313 to 1324 (PFDFLQLEAEMK) form a nonhelical region 8 (NC8) region. Over residues 1321-1341 (AEMKGEKGDRGDAGQKGERGE) the composition is skewed to basic and acidic residues. The segment at 1325–1346 (GEKGDRGDAGQKGERGEPGGGG) is triple-helical region 8 (COL8). A Cell attachment site motif is present at residues 1330 to 1332 (RGD). The segment at 1347 to 1353 (FFGSSLP) is nonhelical region 9 (NC9). Pro residues-rich tracts occupy residues 1353 to 1365 (PGPPGPPGPPGPR), 1401 to 1414 (PPGPPGPPGPPSFP), and 1424 to 1436 (PGPPGPPGPPGPP). The triple-helical region 9 (COL9) stretch occupies residues 1354 to 1411 (GPPGPPGPPGPRGYPGIPGPKGESIRGQPGPPGPQGPPGIGYEGRQGPPGPPGPPGPP). Positions 1412–1424 (SFPGPHRQTISVP) are nonhelical region 10 (NC10). The interval 1425–1442 (GPPGPPGPPGPPGTMGAS) is triple-helical region 10 (COL10). Residues 1443 to 1754 (SGVRLWATRQ…IENSFMTASK (312 aa)) are nonhelical region 11 (NC11). The non-collagenous domain 1 association domain stretch occupies residues 1456-1501 (GQVHEVPEGWLIFVAEQEELYVRVQNGFRKVQLEARTPLPRGTDNE). The tract at residues 1502-1571 (VAALQPPVVQ…RPARPTSPPA (70 aa)) is non-collagenous domain 1 hinge region. Positions 1511–1556 (QLHDSNPYPRREHPHPTARPWRADDILASPPRLPEPQPYPGAPHHS) are disordered. A compositionally biased stretch (basic and acidic residues) spans 1519–1535 (PRREHPHPTARPWRADD). Residues 1541 to 1551 (PRLPEPQPYPG) show a composition bias toward pro residues. Residue threonine 1567 is glycosylated (O-linked (GalNAc...) threonine). Residues histidine 1572, histidine 1574, histidine 1582, and aspartate 1647 each contribute to the Zn(2+) site. 2 disulfide bridges follow: cysteine 1604/cysteine 1744 and cysteine 1706/cysteine 1736.

This sequence belongs to the multiplexin collagen family. In terms of assembly, forms homotrimers. Recombinant non-collagenous domain 1 has stronger affinity to NID1, HSPG2 and laminin-1:NID1 complex and lower affinity to FBLN1 and FBLN2 than endostatin. Monomeric. Interacts with KDR/VEGFR2. Interacts with the ITGA5:ITGB1 complex. Interacts with NID1, HSPG2, laminin-1:NID1 complex, FBLN1 and FBLN2. In terms of processing, prolines at the third position of the tripeptide repeating unit (G-X-Y) of the triple-helical regions are hydroxylated. Circulating endostatins are found as sialoglycoprotein and asialoglycoprotein structures. Post-translationally, undergoes proteolytic processing by CTSL/cathepsin-L and elastase-like proteases to generate both non-collagenous domain 1 trimers and endostatin monomers. In tissue extracts (brain, skeletal muscle, heart, kidney, testis and liver) predominantly bands of approximately 38 kDa are detected; recombinant non-collagenous domain 1 shows similar mobility. In vitro, several proteolytic cleavage sites in the non-collagenous domain 1 hinge region generating different endostatin-like peptides are reported. In terms of tissue distribution, detected in placenta (at protein level). Present in multiple organs with highest levels in liver, lung and kidney.

It is found in the secreted. Its subcellular location is the extracellular space. The protein localises to the extracellular matrix. The protein resides in the basement membrane. In terms of biological role, probably plays a major role in determining the retinal structure as well as in the closure of the neural tube. May regulate extracellular matrix-dependent motility and morphogenesis of endothelial and non-endothelial cells; the function requires homotrimerization and implicates MAPK signaling. Functionally, potently inhibits endothelial cell proliferation and angiogenesis. May inhibit angiogenesis by binding to the heparan sulfate proteoglycans involved in growth factor signaling. Inhibits VEGFA-induced endothelial cell proliferation and migration. Seems to inhibit VEGFA-mediated signaling by blocking the interaction of VEGFA to its receptor KDR/VEGFR2. Modulates endothelial cell migration in an integrin-dependent manner implicating integrin ITGA5:ITGB1 and to a lesser extent ITGAV:ITGB3 and ITGAV:ITGB5. May negatively regulate the activity of homotrimeric non-collagenous domain 1. This is Collagen alpha-1(XVIII) chain from Homo sapiens (Human).